We begin with the raw amino-acid sequence, 670 residues long: DNA ligase (670 aa).

NAD(+) is bound by residues 32–36 (DAEYD), 81–82 (SL), and glutamate 113. Lysine 115 functions as the N6-AMP-lysine intermediate in the catalytic mechanism. NAD(+) contacts are provided by arginine 136, glutamate 173, lysine 290, and lysine 314. Residues cysteine 406, cysteine 409, cysteine 424, and cysteine 430 each contribute to the Zn(2+) site. The 79-residue stretch at 592-670 (EIDSPFAGKT…EQEMMRLLGE (79 aa)) folds into the BRCT domain.

The protein belongs to the NAD-dependent DNA ligase family. LigA subfamily. Mg(2+) is required as a cofactor. It depends on Mn(2+) as a cofactor.

It carries out the reaction NAD(+) + (deoxyribonucleotide)n-3'-hydroxyl + 5'-phospho-(deoxyribonucleotide)m = (deoxyribonucleotide)n+m + AMP + beta-nicotinamide D-nucleotide.. Functionally, DNA ligase that catalyzes the formation of phosphodiester linkages between 5'-phosphoryl and 3'-hydroxyl groups in double-stranded DNA using NAD as a coenzyme and as the energy source for the reaction. It is essential for DNA replication and repair of damaged DNA. The protein is DNA ligase of Erwinia tasmaniensis (strain DSM 17950 / CFBP 7177 / CIP 109463 / NCPPB 4357 / Et1/99).